We begin with the raw amino-acid sequence, 441 residues long: Cysteine desulfurase, mitosomal (441 aa).

Residues 107–108 (AT), N189, Q217, and 237–239 (SGH) contribute to the pyridoxal 5'-phosphate site. K240 bears the N6-(pyridoxal phosphate)lysine mark. Residue T277 coordinates pyridoxal 5'-phosphate. Catalysis depends on C367, which acts as the Cysteine persulfide intermediate. Residue C367 participates in [2Fe-2S] cluster binding.

Belongs to the class-V pyridoxal-phosphate-dependent aminotransferase family. NifS/IscS subfamily. In terms of assembly, interacts with ISD11. Pyridoxal 5'-phosphate is required as a cofactor.

The protein resides in the mitosome. It catalyses the reaction (sulfur carrier)-H + L-cysteine = (sulfur carrier)-SH + L-alanine. In terms of biological role, catalyzes the removal of elemental sulfur from cysteine to produce alanine. It supplies the inorganic sulfur for iron-sulfur (Fe-S) clusters in mitosomes. The protein is Cysteine desulfurase, mitosomal of Trachipleistophora hominis (Microsporidian parasite).